Reading from the N-terminus, the 158-residue chain is UPF0260 protein RHECIAT_CH0001358 (158 aa).

It belongs to the UPF0260 family.

This chain is UPF0260 protein RHECIAT_CH0001358, found in Rhizobium etli (strain CIAT 652).